The sequence spans 362 residues: Protein Tob1 (362 aa).

The short motif at 22–39 (RRRVNIFGEELERLLKKK) is the Bipartite nuclear localization signal element. The interval 82–92 (VRGNLPQDLSV) is important for nuclear localization. Over residues 144–160 (DPASSVSSSPSPPFGHS) the composition is skewed to low complexity. The tract at residues 144–171 (DPASSVSSSPSPPFGHSAAVSPTFMPRS) is disordered. Positions 161–220 (AAVSPTFMPRSTQPLTFTTATFAATKFGSTKMKNSGRSSKVARTSPINLGLTVNVNDLLK) are required for interaction with CPEB3. Position 204 is a phosphothreonine (T204). The short motif at 228–236 (VHSLYGLGL) is the Nuclear export signal element. Residues 234–284 (LGLGSQQQPQPQPQQQQQQQPSSSQPPPPLPQQQQQQPQQQQQQQQQTSAL) form a disordered region. Composition is skewed to low complexity over residues 238-256 (SQQQ…QPSS) and 265-280 (QQQQ…QQQQ).

It belongs to the BTG family. Interacts with ERBB2. Interacts with CNOT7. Interacts with CPEB3 (via C-terminal RNA-binding region); recruits CNOT7 to CPEB3 to form a ternary complex required for mRNA deadenylation and decay. Interacts with CNOT8. Interacts with CPEB4. Phosphorylated on Ser and Thr residues. As to expression, ubiquitous.

The protein resides in the cytoplasm. It localises to the nucleus. Anti-proliferative protein; the function is mediated by association with deadenylase subunits of the CCR4-NOT complex. Mediates CPEB3-accelerated mRNA deadenylation by binding to CPEB3 and recruiting CNOT7 which leads to target mRNA deadenylation and decay. This is Protein Tob1 (Tob1) from Mus musculus (Mouse).